An 80-amino-acid polypeptide reads, in one-letter code: Caltrin (80 aa).

Residues 1-32 (MMAGRRSWPAMATVLLALLVCLGELVDSKPQP) form the signal peptide.

Inhibits calcium transport into spermatozoa; it does not bind directly to calcium. Binds to calmodulin. Inhibits the growth of microorganisms. Seem to act as an antibiotic by permeabilizing the bacterial membrane. The sequence is that of Caltrin (PYY2) from Bos taurus (Bovine).